The sequence spans 180 residues: Shikimate kinase (180 aa).

Residue glycine 14–cysteine 19 participates in ATP binding. Serine 18 contacts Mg(2+). Substrate is bound by residues aspartate 36, arginine 60, and glycine 82. Residue arginine 120 coordinates ATP. Arginine 139 is a substrate binding site.

Belongs to the shikimate kinase family. In terms of assembly, monomer. It depends on Mg(2+) as a cofactor.

The protein resides in the cytoplasm. It catalyses the reaction shikimate + ATP = 3-phosphoshikimate + ADP + H(+). The protein operates within metabolic intermediate biosynthesis; chorismate biosynthesis; chorismate from D-erythrose 4-phosphate and phosphoenolpyruvate: step 5/7. Its function is as follows. Catalyzes the specific phosphorylation of the 3-hydroxyl group of shikimic acid using ATP as a cosubstrate. The polypeptide is Shikimate kinase (Xanthomonas oryzae pv. oryzae (strain PXO99A)).